Consider the following 153-residue polypeptide: Probable Brix domain-containing ribosomal biogenesis protein (153 aa).

Residues 1–153 (MQVLTTSRKP…RILKISRSSR (153 aa)) enclose the Brix domain.

In terms of biological role, probably involved in the biogenesis of the ribosome. This is Probable Brix domain-containing ribosomal biogenesis protein from Archaeoglobus fulgidus (strain ATCC 49558 / DSM 4304 / JCM 9628 / NBRC 100126 / VC-16).